The primary structure comprises 451 residues: Heat shock factor protein (451 aa).

A DNA-binding region spans residues 12–117 (VPAFLAKLWT…LLENIKRKVN (106 aa)). Disordered stretches follow at residues 210–273 (LNDS…LEAS) and 285–307 (LTPSQSPEQSPAPPKLDDTPISP). Positions 232–246 (PSSTSYPVSGFTDSS) are enriched in polar residues.

This sequence belongs to the HSF family. Homotrimer. Exhibits temperature-dependent phosphorylation.

The protein resides in the nucleus. In terms of biological role, DNA-binding protein that specifically binds heat shock promoter elements (HSE) and activates transcription. This is Heat shock factor protein (hsf1) from Xenopus laevis (African clawed frog).